The chain runs to 684 residues: Nuclear transcription factor Y subunit gamma (684 aa).

Disordered stretches follow at residues 1 to 74 (MENQ…NIST), 112 to 238 (MNSP…SSFQ), 414 to 487 (HSPQ…TQQL), and 511 to 650 (QQQQ…KNDE). Low complexity predominate over residues 21 to 49 (SNSHNNHHNNNNNNNYNNNNNNNINNINN). The segment covering 58–74 (KSIQQHSPHSSTPNIST) has biased composition (polar residues). A compositionally biased stretch (low complexity) spans 142-162 (HQHPSSASSSSSSSSSSLSSS). Residues 163-176 (SHHHHSNHHHHHPN) are compositionally biased toward basic residues. Over residues 188 to 203 (PSLNDSSSNGNGTPAL) the composition is skewed to polar residues. A compositionally biased stretch (low complexity) spans 220–238 (TPTSTPNQRFQSNGSSSFQ). Residues 414–423 (HSPQLQEQSS) are compositionally biased toward polar residues. Low complexity predominate over residues 424–437 (NNNNNNNNNNNNNN). Composition is skewed to polar residues over residues 438–456 (SVSV…SPLS) and 464–477 (SQDY…NNHN). Composition is skewed to low complexity over residues 478 to 487 (QSSLSQTQQL), 511 to 522 (QQQQHSQQISQQ), and 529 to 637 (PSNS…NNNN).

This sequence belongs to the NFYC/HAP5 subunit family. Heterotrimeric transcription factor composed of three components, NF-YA, NF-YB and NF-YC. NF-YB and NF-YC must interact and dimerize for NF-YA association and DNA binding.

The protein localises to the nucleus. Functionally, stimulates the transcription of various genes by recognizing and binding to a CCAAT motif in promoters. The sequence is that of Nuclear transcription factor Y subunit gamma (nfyc-1) from Dictyostelium discoideum (Social amoeba).